Consider the following 116-residue polypeptide: Putative oxygen-evolving enhancer protein 1 (116 aa).

It belongs to the PsbO family.

Its subcellular location is the plastid. It localises to the chloroplast thylakoid membrane. Its function is as follows. Stabilizes the manganese cluster which is the primary site of water splitting. This chain is Putative oxygen-evolving enhancer protein 1, found in Pinus strobus (Eastern white pine).